Here is a 442-residue protein sequence, read N- to C-terminus: Putative toxin YopC (442 aa).

In the C-terminal section; belongs to the MbcT/ParT/Res family. As to quaternary structure, forms a complex with cognate antitoxin YopB.

May be the toxic component of a type II toxin-antitoxin (TA) system. Neutralized by its cognate antitoxin YopB. This Bacillus subtilis (strain 168) protein is Putative toxin YopC (yopC).